A 229-amino-acid chain; its full sequence is 2,3-bisphosphoglycerate-dependent phosphoglycerate mutase (229 aa).

Substrate is bound by residues 7-14 (RHGQSEWN), 20-21 (TG), R59, 86-89 (ERHY), K97, 113-114 (RR), and 182-183 (GN). The active-site Tele-phosphohistidine intermediate is the H8. The Proton donor/acceptor role is filled by E86.

The protein belongs to the phosphoglycerate mutase family. BPG-dependent PGAM subfamily.

It catalyses the reaction (2R)-2-phosphoglycerate = (2R)-3-phosphoglycerate. The protein operates within carbohydrate degradation; glycolysis; pyruvate from D-glyceraldehyde 3-phosphate: step 3/5. In terms of biological role, catalyzes the interconversion of 2-phosphoglycerate and 3-phosphoglycerate. This Listeria monocytogenes serotype 4a (strain HCC23) protein is 2,3-bisphosphoglycerate-dependent phosphoglycerate mutase.